The chain runs to 235 residues: Phosphoribosylaminoimidazole-succinocarboxamide synthase (235 aa).

This sequence belongs to the SAICAR synthetase family.

It catalyses the reaction 5-amino-1-(5-phospho-D-ribosyl)imidazole-4-carboxylate + L-aspartate + ATP = (2S)-2-[5-amino-1-(5-phospho-beta-D-ribosyl)imidazole-4-carboxamido]succinate + ADP + phosphate + 2 H(+). It functions in the pathway purine metabolism; IMP biosynthesis via de novo pathway; 5-amino-1-(5-phospho-D-ribosyl)imidazole-4-carboxamide from 5-amino-1-(5-phospho-D-ribosyl)imidazole-4-carboxylate: step 1/2. The chain is Phosphoribosylaminoimidazole-succinocarboxamide synthase from Chlorobaculum tepidum (strain ATCC 49652 / DSM 12025 / NBRC 103806 / TLS) (Chlorobium tepidum).